The chain runs to 443 residues: Glutamine synthetase (443 aa).

Residues Val11–Glu97 form the GS beta-grasp domain. Positions Pro103 to Val443 constitute a GS catalytic domain. Positions 126 and 128 each coordinate Mg(2+). Glu176 contacts ATP. Glu181 and Glu188 together coordinate Mg(2+). An L-glutamate-binding site is contributed by Gly233. Mg(2+) is bound at residue His237. Residues His239–Ser241 and Ser241 each bind ATP. L-glutamate contacts are provided by Arg287, Glu293, and Arg305. The ATP site is built by Arg305 and Arg310. A Mg(2+)-binding site is contributed by Glu322. An L-glutamate-binding site is contributed by Arg324.

It belongs to the glutamine synthetase family. In terms of assembly, oligomer of 12 subunits arranged in the form of two hexagons. The cofactor is Mg(2+). Requires Mn(2+) as cofactor.

It localises to the cytoplasm. The enzyme catalyses L-glutamate + NH4(+) + ATP = L-glutamine + ADP + phosphate + H(+). The catalysed reaction is hydroxylamine + L-glutamate + ATP = L-glutamine hydroxamate + ADP + phosphate. The activity of this enzyme is not controlled by adenylation. Its function is as follows. Carries out the ATP-dependent synthesis of glutamine from ammonium nitrogen and glutamate. Exhibits both L-gamma-glutamylhydroxamate synthetase and gamma-glutamyltransferase activities when using hydroxylamine as substrate; in fact, the enzyme possesses low biosynthetic activity, suggesting that the reaction is biased towards the degradation of glutamine under ammonia-rich conditions. Might play some role in ammonia assimilation under ammonia-starvation conditions. Can also use GTP instead of ATP in the synthetase reaction, but not CTP or UTP. The sequence is that of Glutamine synthetase from Thermococcus kodakarensis (strain ATCC BAA-918 / JCM 12380 / KOD1) (Pyrococcus kodakaraensis (strain KOD1)).